The following is a 122-amino-acid chain: Large ribosomal subunit protein bL12 (122 aa).

It belongs to the bacterial ribosomal protein bL12 family. In terms of assembly, homodimer. Part of the ribosomal stalk of the 50S ribosomal subunit. Forms a multimeric L10(L12)X complex, where L10 forms an elongated spine to which 2 to 4 L12 dimers bind in a sequential fashion. Binds GTP-bound translation factors.

In terms of biological role, forms part of the ribosomal stalk which helps the ribosome interact with GTP-bound translation factors. Is thus essential for accurate translation. This Borrelia hermsii (strain HS1 / DAH) protein is Large ribosomal subunit protein bL12.